The following is a 238-amino-acid chain: UPF0328 protein ECU07_0010 (238 aa).

2 disordered regions span residues 1–154 (MAAP…NTQR) and 211–238 (GRLH…LATL). Over residues 106-128 (HTEGCHTHEANPEPNTKHTETES) the composition is skewed to basic and acidic residues. Positions 129–152 (PKPQTSTQHHTPITIPSSLLSQNT) are enriched in polar residues.

It belongs to the UPF0328 family.

The polypeptide is UPF0328 protein ECU07_0010 (Encephalitozoon cuniculi (strain GB-M1) (Microsporidian parasite)).